Reading from the N-terminus, the 240-residue chain is Ribosomal RNA large subunit methyltransferase E (240 aa).

Residues 1–20 show a composition bias toward gly residues; sequence MSKAGGNKGGVKTGGRGGAG. Residues 1 to 27 form a disordered region; the sequence is MSKAGGNKGGVKTGGRGGAGSSNLQVR. 5 residues coordinate S-adenosyl-L-methionine: Gly-92, Trp-94, Asp-115, Asp-131, and Asp-155. Lys-195 (proton acceptor) is an active-site residue.

This sequence belongs to the class I-like SAM-binding methyltransferase superfamily. RNA methyltransferase RlmE family.

Its subcellular location is the cytoplasm. The catalysed reaction is uridine(2552) in 23S rRNA + S-adenosyl-L-methionine = 2'-O-methyluridine(2552) in 23S rRNA + S-adenosyl-L-homocysteine + H(+). Functionally, specifically methylates the uridine in position 2552 of 23S rRNA at the 2'-O position of the ribose in the fully assembled 50S ribosomal subunit. The chain is Ribosomal RNA large subunit methyltransferase E from Brucella anthropi (strain ATCC 49188 / DSM 6882 / CCUG 24695 / JCM 21032 / LMG 3331 / NBRC 15819 / NCTC 12168 / Alc 37) (Ochrobactrum anthropi).